We begin with the raw amino-acid sequence, 240 residues long: Large ribosomal subunit protein uL3 (240 aa).

Disordered regions lie at residues 138-158 (SISHRSHGSTGGRQDPGKTFK) and 215-240 (EAPLPGKFRLANEGAEPAPATESAEG). The residue at position 151 (Gln151) is an N5-methylglutamine.

This sequence belongs to the universal ribosomal protein uL3 family. In terms of assembly, part of the 50S ribosomal subunit. Forms a cluster with proteins L14 and L19. Post-translationally, methylated by PrmB.

In terms of biological role, one of the primary rRNA binding proteins, it binds directly near the 3'-end of the 23S rRNA, where it nucleates assembly of the 50S subunit. This Beijerinckia indica subsp. indica (strain ATCC 9039 / DSM 1715 / NCIMB 8712) protein is Large ribosomal subunit protein uL3.